A 302-amino-acid polypeptide reads, in one-letter code: Catechol 1,2-dioxygenase (302 aa).

4 residues coordinate Fe cation: Tyr-164, Tyr-198, His-222, and His-224.

It belongs to the intradiol ring-cleavage dioxygenase family. Requires Fe(3+) as cofactor.

The catalysed reaction is catechol + O2 = cis,cis-muconate + 2 H(+). The protein operates within aromatic compound metabolism; beta-ketoadipate pathway; 5-oxo-4,5-dihydro-2-furylacetate from catechol: step 1/3. The sequence is that of Catechol 1,2-dioxygenase (pheB) from Pseudomonas sp. (strain EST1001).